A 118-amino-acid chain; its full sequence is uncharacterized protein (118 aa).

Cys-11 and Cys-14 are disulfide-bonded.

It belongs to the ArsC family.

This is an uncharacterized protein from Bacillus subtilis (strain 168).